The following is a 1184-amino-acid chain: DNA-directed RNA polymerase subunit beta (1184 aa).

It belongs to the RNA polymerase beta chain family. As to quaternary structure, the RNAP catalytic core consists of 2 alpha, 1 beta, 1 beta' and 1 omega subunit. When a sigma factor is associated with the core the holoenzyme is formed, which can initiate transcription.

It catalyses the reaction RNA(n) + a ribonucleoside 5'-triphosphate = RNA(n+1) + diphosphate. Its function is as follows. DNA-dependent RNA polymerase catalyzes the transcription of DNA into RNA using the four ribonucleoside triphosphates as substrates. In Fusobacterium nucleatum subsp. nucleatum (strain ATCC 25586 / DSM 15643 / BCRC 10681 / CIP 101130 / JCM 8532 / KCTC 2640 / LMG 13131 / VPI 4355), this protein is DNA-directed RNA polymerase subunit beta.